The sequence spans 1111 residues: Zinc finger protein GLI1 (1111 aa).

Positions 52–78 (GYGAARETSSCTEGSLFPPPPPPRSSV) are disordered. An interaction with SUFU region spans residues 123–127 (SYGHL). C2H2-type zinc fingers lie at residues 238-263 (TDCR…NSEH), 271-298 (FVCH…MRRH), 304-328 (HKCT…LRSH), 334-359 (YMCE…NRTH), and 365-390 (YVCK…KTVH). The interaction with DNA stretch occupies residues 286 to 294 (KAQYMLVVH). 2 interaction with DNA regions span residues 348-353 (ASDRAK) and 378-384 (DPSSLRK). The disordered stretch occupies residues 378–487 (DPSSLRKHVK…EDLSSLDEGP (110 aa)). Over residues 416 to 431 (EPKREREGGSGREESR) the composition is skewed to basic and acidic residues. The segment covering 439–465 (MPQQSPGAQSSCSSDHSPAGSAANTDS) has biased composition (polar residues). An N6-acetyllysine modification is found at Lys-520. Disordered stretches follow at residues 528–583 (GAPV…LPGL), 598–649 (ARGS…RAAD), 673–692 (TGRN…QPPS), and 832–891 (PCLN…SSHS). Over residues 546 to 562 (SSSSSMSSAYTVSRRSS) the composition is skewed to low complexity. Residues 640–649 (RASDPARAAD) are compositionally biased toward basic and acidic residues. Pro residues predominate over residues 855-870 (LPQPQYPQSGPYPQPP). Residue Lys-1008 forms a Glycyl lysine isopeptide (Lys-Gly) (interchain with G-Cter in SUMO2) linkage. Positions 1064-1093 (LSPPLSHEQGDSSKNTPSPSGPPNMAVGNM) are disordered.

The protein belongs to the GLI C2H2-type zinc-finger protein family. In terms of assembly, interacts with KIF7. Interacts with STK36. Interacts with ZIC1; the interaction enhances transcription activation. Interacts with SUFU; this inhibits transcriptional activation by GLI1. Phosphorylated in vitro by ULK3. In terms of processing, acetylation at Lys-520 down-regulates transcriptional activity. Deacetylated by HDAC1. Post-translationally, ubiquitinated by the CRL2(FEM1B) complex, suppressing GLI1 transcriptional activator activity.

Its subcellular location is the cytoplasm. The protein localises to the nucleus. Its function is as follows. Acts as a transcriptional activator. Binds to the DNA consensus sequence 5'-GACCACCCA-3'. Regulates the transcription of specific genes during normal development. Plays a role in craniofacial development and digital development, as well as development of the central nervous system and gastrointestinal tract. Mediates SHH signaling. Plays a role in cell proliferation and differentiation via its role in SHH signaling. This is Zinc finger protein GLI1 (Gli1) from Mus musculus (Mouse).